The following is a 251-amino-acid chain: Putative ATP-binding protein Rv3427c in insertion sequence (251 aa).

Residue 108–115 (GPVGVGKT) participates in ATP binding.

This sequence belongs to the IS21/IS1162 putative ATP-binding protein family.

The chain is Putative ATP-binding protein Rv3427c in insertion sequence from Mycobacterium tuberculosis (strain ATCC 25618 / H37Rv).